The primary structure comprises 349 residues: Phosphoribosylformylglycinamidine cyclo-ligase (349 aa).

It belongs to the AIR synthase family.

Its subcellular location is the cytoplasm. It carries out the reaction 2-formamido-N(1)-(5-O-phospho-beta-D-ribosyl)acetamidine + ATP = 5-amino-1-(5-phospho-beta-D-ribosyl)imidazole + ADP + phosphate + H(+). Its pathway is purine metabolism; IMP biosynthesis via de novo pathway; 5-amino-1-(5-phospho-D-ribosyl)imidazole from N(2)-formyl-N(1)-(5-phospho-D-ribosyl)glycinamide: step 2/2. The sequence is that of Phosphoribosylformylglycinamidine cyclo-ligase from Jannaschia sp. (strain CCS1).